The primary structure comprises 394 residues: Cysteine protease ATG4B (394 aa).

Cys-74 (nucleophile) is an active-site residue. Catalysis depends on residues Asp-280 and His-282. The LIR motif lies at 389 to 392 (FEIL).

This sequence belongs to the peptidase C54 family.

Its subcellular location is the cytoplasm. The protein resides in the cytosol. It is found in the cytoplasmic vesicle. The protein localises to the autophagosome. It localises to the endoplasmic reticulum. Its subcellular location is the mitochondrion. It carries out the reaction [protein]-C-terminal L-amino acid-glycyl-phosphatidylethanolamide + H2O = [protein]-C-terminal L-amino acid-glycine + a 1,2-diacyl-sn-glycero-3-phosphoethanolamine. It catalyses the reaction [protein]-C-terminal L-amino acid-glycyl-phosphatidylserine + H2O = [protein]-C-terminal L-amino acid-glycine + a 1,2-diacyl-sn-glycero-3-phospho-L-serine. Cysteine protease that plays a key role in autophagy by mediating both proteolytic activation and delipidation of ATG8 family proteins. Required for canonical autophagy (macroautophagy), non-canonical autophagy as well as for mitophagy. The protease activity is required for proteolytic activation of ATG8 family proteins: cleaves the C-terminal amino acid of ATG8 proteins to reveal a C-terminal glycine. Exposure of the glycine at the C-terminus is essential for ATG8 proteins conjugation to phosphatidylethanolamine (PE) and insertion to membranes, which is necessary for autophagy. Protease activity is also required to counteract formation of high-molecular weight conjugates of ATG8 proteins (ATG8ylation): acts as a deubiquitinating-like enzyme that removes ATG8 conjugated to other proteins, such as ATG3. In addition to the protease activity, also mediates delipidation of ATG8 family proteins. Catalyzes delipidation of PE-conjugated forms of ATG8 proteins during macroautophagy. Also involved in non-canonical autophagy, a parallel pathway involving conjugation of ATG8 proteins to single membranes at endolysosomal compartments, by catalyzing delipidation of ATG8 proteins conjugated to phosphatidylserine (PS). The polypeptide is Cysteine protease ATG4B (Danio rerio (Zebrafish)).